A 376-amino-acid chain; its full sequence is Putative glutamate--cysteine ligase 2-1 (376 aa).

Belongs to the glutamate--cysteine ligase type 2 family. YbdK subfamily.

It carries out the reaction L-cysteine + L-glutamate + ATP = gamma-L-glutamyl-L-cysteine + ADP + phosphate + H(+). In terms of biological role, ATP-dependent carboxylate-amine ligase which exhibits weak glutamate--cysteine ligase activity. This Mycobacterium sp. (strain JLS) protein is Putative glutamate--cysteine ligase 2-1.